A 356-amino-acid polypeptide reads, in one-letter code: Alanine racemase, catabolic (356 aa).

The active-site Proton acceptor; specific for D-alanine is Lys-35. Lys-35 is modified (N6-(pyridoxal phosphate)lysine). Arg-130 is a substrate binding site. Tyr-253 acts as the Proton acceptor; specific for L-alanine in catalysis. A substrate-binding site is contributed by Met-301.

Belongs to the alanine racemase family. Pyridoxal 5'-phosphate is required as a cofactor.

It carries out the reaction L-alanine = D-alanine. Isomerizes L-alanine to D-alanine which is then oxidized to pyruvate by DadA. This is Alanine racemase, catabolic (dadX) from Escherichia coli (strain K12).